Consider the following 352-residue polypeptide: Ion-translocating oxidoreductase complex subunit D (352 aa).

5 consecutive transmembrane segments (helical) span residues 20–40 (IMLL…RFFG), 42–62 (GTLV…ALVL), 78–109 (ALLT…VIIA), 123–143 (PAMI…TSWL), and 148–168 (IAVN…GHTA). Threonine 187 carries the post-translational modification FMN phosphoryl threonine. The next 4 helical transmembrane spans lie at 214–234 (ILAG…GVWL), 242–262 (WHIP…GWLF), 267–287 (LAAP…FFIL), and 301–318 (LMFG…RSFG).

It belongs to the NqrB/RnfD family. In terms of assembly, the complex is composed of six subunits: RsxA, RsxB, RsxC, RsxD, RsxE and RsxG. FMN is required as a cofactor.

It is found in the cell inner membrane. In terms of biological role, part of a membrane-bound complex that couples electron transfer with translocation of ions across the membrane. Required to maintain the reduced state of SoxR. This chain is Ion-translocating oxidoreductase complex subunit D, found in Shigella flexneri.